Reading from the N-terminus, the 257-residue chain is Ribonuclease PH (257 aa).

Residues Arg86 and 124-126 (GTR) each bind phosphate.

Belongs to the RNase PH family. As to quaternary structure, homohexameric ring arranged as a trimer of dimers.

It carries out the reaction tRNA(n+1) + phosphate = tRNA(n) + a ribonucleoside 5'-diphosphate. Functionally, phosphorolytic 3'-5' exoribonuclease that plays an important role in tRNA 3'-end maturation. Removes nucleotide residues following the 3'-CCA terminus of tRNAs; can also add nucleotides to the ends of RNA molecules by using nucleoside diphosphates as substrates, but this may not be physiologically important. Probably plays a role in initiation of 16S rRNA degradation (leading to ribosome degradation) during starvation. This is Ribonuclease PH from Halalkalibacterium halodurans (strain ATCC BAA-125 / DSM 18197 / FERM 7344 / JCM 9153 / C-125) (Bacillus halodurans).